Reading from the N-terminus, the 315-residue chain is Glutaminase (315 aa).

Substrate-binding residues include serine 70, asparagine 120, glutamate 166, asparagine 173, tyrosine 197, tyrosine 249, and valine 267.

It belongs to the glutaminase family. In terms of assembly, homotetramer.

It catalyses the reaction L-glutamine + H2O = L-glutamate + NH4(+). The polypeptide is Glutaminase (Sinorhizobium fredii (strain NBRC 101917 / NGR234)).